The primary structure comprises 625 residues: tRNA-guanine(15) transglycosylase (625 aa).

Residue D86 is the Nucleophile of the active site. Positions 121 and 184 each coordinate substrate. Residues 546 to 621 (GLRVVVDDES…VAVKVHEGVN (76 aa)) form the PUA domain.

This sequence belongs to the archaeosine tRNA-ribosyltransferase family. It depends on Zn(2+) as a cofactor.

It carries out the reaction guanosine(15) in tRNA + 7-cyano-7-deazaguanine = 7-cyano-7-carbaguanosine(15) in tRNA + guanine. It functions in the pathway tRNA modification; archaeosine-tRNA biosynthesis. Functionally, exchanges the guanine residue with 7-cyano-7-deazaguanine (preQ0) at position 15 in the dihydrouridine loop (D-loop) of archaeal tRNAs. This chain is tRNA-guanine(15) transglycosylase, found in Picrophilus torridus (strain ATCC 700027 / DSM 9790 / JCM 10055 / NBRC 100828 / KAW 2/3).